The following is a 143-amino-acid chain: Small ribosomal subunit protein uS12 (143 aa).

The span at 1 to 15 (MGKCRGLRTARKLRD) shows a compositional bias: basic residues. A disordered region spans residues 1–27 (MGKCRGLRTARKLRDHRREQKWHDKQY). The span at 16-27 (HRREQKWHDKQY) shows a compositional bias: basic and acidic residues.

The protein belongs to the universal ribosomal protein uS12 family. In terms of assembly, component of the 40S small ribosomal subunit.

It localises to the cytoplasm. It is found in the cytosol. Its subcellular location is the rough endoplasmic reticulum. In Ictalurus punctatus (Channel catfish), this protein is Small ribosomal subunit protein uS12 (rps23).